Here is a 494-residue protein sequence, read N- to C-terminus: UPF0371 protein spyM18_1356 (494 aa).

This sequence belongs to the UPF0371 family.

This chain is UPF0371 protein spyM18_1356, found in Streptococcus pyogenes serotype M18 (strain MGAS8232).